Here is a 370-residue protein sequence, read N- to C-terminus: Nociceptin receptor (370 aa).

The Extracellular portion of the chain corresponds to Met1 to Leu48. 3 N-linked (GlcNAc...) asparagine glycosylation sites follow: Asn21, Asn28, and Asn39. A helical membrane pass occupies residues Gly49–Tyr74. Over Val75–Asn87 the chain is Cytoplasmic. A helical membrane pass occupies residues Ile88–Thr109. Residues Asp110 to Lys124 are Extracellular-facing. Cysteines 123 and 200 form a disulfide. The helical transmembrane segment at Ala125 to Val146 threads the bilayer. Residues Asp147–Ser165 are Cytoplasmic-facing. Residues Lys166–Met188 form a helical membrane-spanning segment. The Extracellular segment spans residues Gly189–Trp211. A helical membrane pass occupies residues Gly212–Ser236. The Cytoplasmic segment spans residues Leu237 to Leu264. Residues Val265–Val285 form a helical membrane-spanning segment. Residues Gln286–Val300 are Extracellular-facing. A helical transmembrane segment spans residues Leu301–Leu322. Over Asp323 to Ala370 the chain is Cytoplasmic. Cys334 carries S-palmitoyl cysteine lipidation.

This sequence belongs to the G-protein coupled receptor 1 family. In terms of processing, phosphorylation at Ser-363 requires GRK3. Detected in brain cortex, stomach, ileum, jejunum and colon.

The protein localises to the cell membrane. The protein resides in the cytoplasmic vesicle. In terms of biological role, G-protein coupled opioid receptor that functions as a receptor for the endogenous neuropeptide nociceptin. Ligand binding causes a conformation change that triggers signaling via guanine nucleotide-binding proteins (G proteins) and modulates the activity of down-stream effectors. Signaling via G proteins mediates inhibition of adenylate cyclase activity and calcium channel activity. Arrestins modulate signaling via G proteins and mediate the activation of alternative signaling pathways that lead to the activation of MAP kinases. Plays a role in modulating nociception and the perception of pain. Plays a role in the regulation of locomotor activity by the neuropeptide nociceptin. The polypeptide is Nociceptin receptor (OPRL1) (Sus scrofa (Pig)).